Consider the following 396-residue polypeptide: Argininosuccinate synthase (396 aa).

Residue 6-14 (AYSGGLDTS) participates in ATP binding. Y83 is a binding site for L-citrulline. G113 contributes to the ATP binding site. Positions 115, 119, and 120 each coordinate L-aspartate. N119 lines the L-citrulline pocket. 5 residues coordinate L-citrulline: R123, S171, S180, E256, and Y268.

It belongs to the argininosuccinate synthase family. Type 1 subfamily. As to quaternary structure, homotetramer.

It is found in the cytoplasm. The catalysed reaction is L-citrulline + L-aspartate + ATP = 2-(N(omega)-L-arginino)succinate + AMP + diphosphate + H(+). Its pathway is amino-acid biosynthesis; L-arginine biosynthesis; L-arginine from L-ornithine and carbamoyl phosphate: step 2/3. This Hyperthermus butylicus (strain DSM 5456 / JCM 9403 / PLM1-5) protein is Argininosuccinate synthase.